The chain runs to 376 residues: Putative aryl-alcohol dehydrogenase AAD14 (376 aa).

Residue tyrosine 76 is the Proton donor of the active site. A substrate-binding site is contributed by histidine 151. NADP(+) is bound at residue 236–246; it reads DVMGGGRFQSK.

Belongs to the aldo/keto reductase family. Aldo/keto reductase 2 subfamily.

This is Putative aryl-alcohol dehydrogenase AAD14 (AAD14) from Saccharomyces cerevisiae (strain ATCC 204508 / S288c) (Baker's yeast).